The primary structure comprises 395 residues: MEKISDLIECIAYEKNLPKEMISKVIQGCLLKMAQNELDPLARYLVVEENKQLQLIQLVEVLEDDDERLVNDPSKYISLSKAKEMDPSVKIKDELSYSLSLESMKQGAINRLFKDLQYQLEKALEDSHFEAFQKRLNSVLMGQVILVDHNQNTFIEIEQQFQGVLSMRHRIKGESFKIGDSIKAVLTQVKRTKKGLLLELSRTTPKMLEALLELEVPEIKDKEIEIIHCARIPGNRAKVSFFSHNSRIDPIGAAVGVKGVRINAISNELNKENIDCIEYSNVPEIYITLALAPAKILSVEIKKIPIEELSAEEKESIQERFIVNNHLQKAKVRLLDIEKSKAIGKGGVNVCLASMLTGYHIEFETIPSVKENAENENEKETPKVGVEALESLFKN.

Residues 137-201 (NSVLMGQVIL…TKKGLLLELS (65 aa)) form the S1 motif domain. KH domains lie at 243 to 291 (SHNS…TLAL) and 331 to 378 (KVRL…NENE).

This sequence belongs to the NusA family. As to quaternary structure, monomer. Binds directly to the core enzyme of the DNA-dependent RNA polymerase and to nascent RNA.

The protein resides in the cytoplasm. Functionally, participates in both transcription termination and antitermination. This Helicobacter pylori (strain J99 / ATCC 700824) (Campylobacter pylori J99) protein is Transcription termination/antitermination protein NusA.